The primary structure comprises 435 residues: 5-methylthioadenosine/S-adenosylhomocysteine deaminase (435 aa).

Zn(2+) is bound by residues His65 and His67. Residues Glu94, Arg150, and His189 each coordinate substrate. His216 lines the Zn(2+) pocket. Substrate contacts are provided by Glu219 and Asp304. Position 304 (Asp304) interacts with Zn(2+).

It belongs to the metallo-dependent hydrolases superfamily. MTA/SAH deaminase family. It depends on Zn(2+) as a cofactor.

It catalyses the reaction S-adenosyl-L-homocysteine + H2O + H(+) = S-inosyl-L-homocysteine + NH4(+). The catalysed reaction is S-methyl-5'-thioadenosine + H2O + H(+) = S-methyl-5'-thioinosine + NH4(+). In terms of biological role, catalyzes the deamination of 5-methylthioadenosine and S-adenosyl-L-homocysteine into 5-methylthioinosine and S-inosyl-L-homocysteine, respectively. Is also able to deaminate adenosine. This Bacillus cereus (strain ATCC 10987 / NRS 248) protein is 5-methylthioadenosine/S-adenosylhomocysteine deaminase.